Reading from the N-terminus, the 210-residue chain is Small heat shock protein hspG6 (210 aa).

Residues 34–210 form the sHSP domain; the sequence is KTIIDKLPPM…YSNTIKININ (177 aa). Residues 93–151 form a disordered region; sequence VIEKSTSSSTLDSKEDEPSIEEFEDDIKPKSKSDNTTVSTTTTATTKENKEDENKTKST. Positions 126–138 are enriched in low complexity; the sequence is DNTTVSTTTTATT. The segment covering 139–151 has biased composition (basic and acidic residues); it reads KENKEDENKTKST.

Belongs to the small heat shock protein (HSP20) family.

The sequence is that of Small heat shock protein hspG6 (hspG6) from Dictyostelium discoideum (Social amoeba).